We begin with the raw amino-acid sequence, 175 residues long: B9 domain-containing protein 2 (175 aa).

Residues 2-118 (AEVHVIGQII…DCPTWRPLGS (117 aa)) form the C2 B9-type domain.

The protein belongs to the B9D family. As to quaternary structure, part of the tectonic-like complex (also named B9 complex). Interacts with TUBG1. As to expression, highest expression in thymus and skeletal muscle. Also expressed in spleen, kidney, lung, heart, microglia and liver. Detected in brain (at protein level).

Its subcellular location is the cytoplasm. The protein resides in the cytoskeleton. It is found in the cilium basal body. The protein localises to the cilium axoneme. It localises to the nucleus. Component of the tectonic-like complex, a complex localized at the transition zone of primary cilia and acting as a barrier that prevents diffusion of transmembrane proteins between the cilia and plasma membranes. This Mus musculus (Mouse) protein is B9 domain-containing protein 2 (B9d2).